Consider the following 146-residue polypeptide: Tol-Pal system protein TolR (146 aa).

Residues 16–36 (VVPYIDVMLVLLVIFMVTAPM) form a helical membrane-spanning segment.

Belongs to the ExbD/TolR family. The Tol-Pal system is composed of five core proteins: the inner membrane proteins TolA, TolQ and TolR, the periplasmic protein TolB and the outer membrane protein Pal. They form a network linking the inner and outer membranes and the peptidoglycan layer.

The protein localises to the cell inner membrane. Its function is as follows. Part of the Tol-Pal system, which plays a role in outer membrane invagination during cell division and is important for maintaining outer membrane integrity. In Pseudomonas aeruginosa (strain ATCC 15692 / DSM 22644 / CIP 104116 / JCM 14847 / LMG 12228 / 1C / PRS 101 / PAO1), this protein is Tol-Pal system protein TolR.